We begin with the raw amino-acid sequence, 349 residues long: 2-oxoglutarate-Fe(II) type oxidoreductase hxnY (349 aa).

The 105-residue stretch at 178-282 (GVATMRMLHY…RYSIPFFFSG (105 aa)) folds into the Fe2OG dioxygenase domain. Fe cation contacts are provided by His-205, Asp-207, and His-263. Residue Arg-273 coordinates 2-oxoglutarate.

The protein belongs to the iron/ascorbate-dependent oxidoreductase family. It depends on Fe(2+) as a cofactor.

2-oxoglutarate-Fe(II) type oxidoreductase, part of the hnx cluster involved in the purine degradation. The nicotinate hydroxylase hnxS accepts nicotinate as a substrate and catalyzes the first step of nicotinate catabolism. The major facilitator-type transporters hxnP and hxnZ are probably involved in the uptake of nicotinate-derived metabolites, and the oxidoreductases hxnT and hxnY in the further metabolism of 6-OH nicotinic acid. This chain is 2-oxoglutarate-Fe(II) type oxidoreductase hxnY, found in Emericella nidulans (strain FGSC A4 / ATCC 38163 / CBS 112.46 / NRRL 194 / M139) (Aspergillus nidulans).